The chain runs to 340 residues: Glyceraldehyde-3-phosphate dehydrogenase (340 aa).

NAD(+) is bound by residues 11-12 and Gly111; that span reads SI. 140–142 contributes to the D-glyceraldehyde 3-phosphate binding site; it reads SCN. Catalysis depends on Cys141, which acts as the Nucleophile. NAD(+) is bound at residue Arg169. 195 to 196 lines the D-glyceraldehyde 3-phosphate pocket; sequence HG. Residue Gln303 participates in NAD(+) binding.

The protein belongs to the glyceraldehyde-3-phosphate dehydrogenase family. As to quaternary structure, homotetramer.

The protein localises to the cytoplasm. It carries out the reaction D-glyceraldehyde 3-phosphate + phosphate + NADP(+) = (2R)-3-phospho-glyceroyl phosphate + NADPH + H(+). It catalyses the reaction D-glyceraldehyde 3-phosphate + phosphate + NAD(+) = (2R)-3-phospho-glyceroyl phosphate + NADH + H(+). The protein operates within carbohydrate degradation; glycolysis; pyruvate from D-glyceraldehyde 3-phosphate: step 1/5. The polypeptide is Glyceraldehyde-3-phosphate dehydrogenase (Methanococcus vannielii (strain ATCC 35089 / DSM 1224 / JCM 13029 / OCM 148 / SB)).